Here is a 297-residue protein sequence, read N- to C-terminus: PsbP domain-containing protein 5, chloroplastic (297 aa).

It belongs to the PsbP family.

The protein resides in the plastid. The protein localises to the chloroplast thylakoid lumen. Its function is as follows. Involved in strigolactone biosynthesis. The sequence is that of PsbP domain-containing protein 5, chloroplastic (PPD5) from Arabidopsis thaliana (Mouse-ear cress).